The chain runs to 474 residues: MSKTYVGSRVRQLRNERGFSQAALAQMLEISPSYLNQIEHDVRPLTVAVLLRITEVFGVDATFFASQDDTRLVAELREVTLDRDLDIAIDPHEVAEMVSAHPGLACAVVNLHRRYRITTAQLAAATEERFSDGSGRGSITMPHEEVRDYFYQRQNYLHALDTAAEDLTAQMRMHHGDLARELTRRLTEVHGVRINKRIDLGDTVLHRYDPATNTLEISSHLSPGQQVFKMAAELAYLEFGDLIDAMVTDGKFTSAESRTLARLGLANYFAAATVLPYRQFHDVAENFRYDVERLSAFYSVSYETIAHRLSTLQRPSMRGVPFTFVRVDRAGNMSKRQSATGFHFSSSGGTCPLWNVYETFANPGKILVQIAQMPDGRNYLWVARTVELRAARYGQPGKTFAIGLGCELRHAHRLVYSEGLDLSGDPNTAATPIGAGCRVCERDNCPQRAFPALGRALDLDEHRSTVSPYLVKQL.

Residues 10–64 (VRQLRNERGFSQAALAQMLEISPSYLNQIEHDVRPLTVAVLLRITEVFGVDATFF) form the HTH cro/C1-type domain. The H-T-H motif DNA-binding region spans 21-40 (QAALAQMLEISPSYLNQIEH).

Belongs to the short-chain fatty acyl-CoA assimilation regulator (ScfR) family.

Involved in the control of the glyoxylate cycle. RamB negatively controls the expression of icl expression during growth on acetate as the sole carbon source. The sequence is that of HTH-type transcriptional regulator RamB from Mycobacterium tuberculosis (strain CDC 1551 / Oshkosh).